The following is a 510-amino-acid chain: Cytochrome P450 703A2 (510 aa).

The chain crosses the membrane as a helical span at residues 2-22 (ILVLASLFAVLILNVLLWRWL). Cysteine 451 is a heme binding site.

Belongs to the cytochrome P450 family. The cofactor is heme.

The protein resides in the membrane. The enzyme catalyses dodecanoate + reduced [NADPH--hemoprotein reductase] + O2 = 7-hydroxydodecanoate + oxidized [NADPH--hemoprotein reductase] + H2O + H(+). In terms of biological role, involved in pollen wall development. Catalyzes the conversion of medium-chain saturated fatty acids to the corresponding monohydroxylated fatty acids, with a preferential hydroxylation of lauric acid at the C-7 position. In-chain hydroxylated fatty acids, together with omega-hydroxylated fatty acids, are key monomeric aliphatic building blocks for sporopollenin synthesis during exine formation. The chain is Cytochrome P450 703A2 from Arabidopsis thaliana (Mouse-ear cress).